Reading from the N-terminus, the 443-residue chain is Trigger factor (443 aa).

Positions 161-246 (GDKVVIDFQG…IKKIMEGKLP (86 aa)) constitute a PPIase FKBP-type domain.

It belongs to the FKBP-type PPIase family. Tig subfamily.

It is found in the cytoplasm. It catalyses the reaction [protein]-peptidylproline (omega=180) = [protein]-peptidylproline (omega=0). Its function is as follows. Involved in protein export. Acts as a chaperone by maintaining the newly synthesized protein in an open conformation. Functions as a peptidyl-prolyl cis-trans isomerase. The polypeptide is Trigger factor (Legionella pneumophila (strain Lens)).